Reading from the N-terminus, the 240-residue chain is LexA repressor (240 aa).

The H-T-H motif DNA-binding region spans 26-46 (FDEMKDALDLASKSGIHRLIT). Catalysis depends on for autocatalytic cleavage activity residues S160 and K198.

Belongs to the peptidase S24 family. In terms of assembly, homodimer.

It catalyses the reaction Hydrolysis of Ala-|-Gly bond in repressor LexA.. In terms of biological role, represses a number of genes involved in the response to DNA damage (SOS response), including recA and lexA. In the presence of single-stranded DNA, RecA interacts with LexA causing an autocatalytic cleavage which disrupts the DNA-binding part of LexA, leading to derepression of the SOS regulon and eventually DNA repair. The protein is LexA repressor of Agrobacterium fabrum (strain C58 / ATCC 33970) (Agrobacterium tumefaciens (strain C58)).